The following is a 304-amino-acid chain: Cytochrome c biogenesis protein CcsA (304 aa).

8 helical membrane passes run 11–31 (SLGF…FWAV), 37–57 (AGLV…QLIL), 63–83 (GHFP…ACTL), 96–116 (IVAA…SFAL), 141–161 (VIMV…AVLV), 212–232 (TITV…VWAN), 246–263 (TWAL…HTRL), and 275–295 (VAVV…LLGI).

It belongs to the CcmF/CycK/Ccl1/NrfE/CcsA family. May interact with ccs1.

The protein localises to the cellular thylakoid membrane. Its function is as follows. Required during biogenesis of c-type cytochromes (cytochrome c6 and cytochrome f) at the step of heme attachment. In Synechococcus sp. (strain CC9605), this protein is Cytochrome c biogenesis protein CcsA.